Reading from the N-terminus, the 639-residue chain is RNA polymerase II elongation factor ELL2 (639 aa).

Disordered stretches follow at residues 175 to 203 (DTVP…SVSQ), 291 to 326 (LNPS…SDFI), 378 to 416 (PSTH…SFSQ), and 439 to 513 (PSSA…EGCT). The span at 291–317 (LNPSQNASTSRSESPLCSSKDAASSPQ) shows a compositional bias: polar residues. Low complexity predominate over residues 378–401 (PSTHLPVSNPPQTVNSNSNSPSTP). A compositionally biased stretch (basic residues) spans 457-469 (SHKKSKKKSKKHK). Residues 470 to 479 (EKDQIKKLDI) are compositionally biased toward basic and acidic residues. The span at 480–490 (ETMEEKEEDLQ) shows a compositional bias: acidic residues. Phosphoserine occurs at positions 501 and 579. An OCEL domain is found at 525–635 (PDYLIKYIAI…LIGEFDQQQA (111 aa)).

The protein belongs to the ELL/occludin family. In terms of assembly, component of the super elongation complex (SEC), at least composed of EAF1, EAF2, CDK9, MLLT3/AF9, AFF (AFF1 or AFF4), the P-TEFb complex and ELL (ELL, ELL2 or ELL3). Component of the little elongation complex (LEC), at least composed of ELL (ELL, ELL2 or ELL3), ZC3H8, ICE1 and ICE2. Interacts with AFF4; the interaction is direct and leads to stabilize ELL2 and prevent ELL2 ubiquitination. Interacts with EAF1 and EAF2. Post-translationally, ubiquitinated by SIAH1, leading to its degradation by the proteasome. Interaction with AFF4 stabilizes ELL2 and prevents ELL2 ubiquitination.

Its subcellular location is the nucleus. Functionally, elongation factor component of the super elongation complex (SEC), a complex required to increase the catalytic rate of RNA polymerase II transcription by suppressing transient pausing by the polymerase at multiple sites along the DNA. Component of the little elongation complex (LEC), a complex required to regulate small nuclear RNA (snRNA) gene transcription by RNA polymerase II and III. Plays a role in immunoglobulin secretion in plasma cells: directs efficient alternative mRNA processing, influencing both proximal poly(A) site choice and exon skipping, as well as immunoglobulin heavy chain (IgH) alternative processing. Probably acts by regulating histone modifications accompanying transition from membrane-specific to secretory IgH mRNA expression. In Mus musculus (Mouse), this protein is RNA polymerase II elongation factor ELL2 (Ell2).